A 287-amino-acid chain; its full sequence is Elongation factor Ts (287 aa).

The tract at residues 80-83 is involved in Mg(2+) ion dislocation from EF-Tu; the sequence is TDFL.

This sequence belongs to the EF-Ts family.

The protein localises to the cytoplasm. Its function is as follows. Associates with the EF-Tu.GDP complex and induces the exchange of GDP to GTP. It remains bound to the aminoacyl-tRNA.EF-Tu.GTP complex up to the GTP hydrolysis stage on the ribosome. This Pseudomonas syringae pv. syringae (strain B728a) protein is Elongation factor Ts.